A 383-amino-acid polypeptide reads, in one-letter code: MAEKRDYYDVLGVGRDASDDEIKKAYRKLSKKYHPDINKAPDAEAKFKEVTEAYEALSDPQKRAAYDQYGHAGMNGGFGGGAGAGQGFGGFGGGAEGFGGFDDIFSSFFGGGARQQPNGPRQGSDLQYRMDLKFEEAVFGKETKISYSREAECHTCHGSGAKPGTSAETCHKCHGAGQIQVERQTPLGRMMSRETCDVCGGTGKEIKSKCDTCHGTGREEERHTVKVKVPAGVEDGQQMRLQGQGEAGSNGGPYGDLFIVFRVAPSDEFERDGAQIFVEVPISFVQAALGDEIEVNTVHGPVKLKIPAGTQTNTVFRLRGKGAPKLHGTGNGDQKVTVNVVTPKSLNSKQRDALKAFAVASGDSVNPQDNNLFDKILNKKHKK.

The J domain maps to 6 to 70; the sequence is DYYDVLGVGR…QKRAAYDQYG (65 aa). The CR-type zinc-finger motif lies at 140 to 222; that stretch reads GKETKISYSR…CHGTGREEER (83 aa). Zn(2+) contacts are provided by Cys-153, Cys-156, Cys-170, Cys-173, Cys-196, Cys-199, Cys-210, and Cys-213. 4 CXXCXGXG motif repeats span residues 153-160, 170-177, 196-203, and 210-217; these read CHTCHGSG, CHKCHGAG, CDVCGGTG, and CDTCHGTG.

It belongs to the DnaJ family. As to quaternary structure, homodimer. It depends on Zn(2+) as a cofactor.

The protein resides in the cytoplasm. Functionally, participates actively in the response to hyperosmotic and heat shock by preventing the aggregation of stress-denatured proteins and by disaggregating proteins, also in an autonomous, DnaK-independent fashion. Unfolded proteins bind initially to DnaJ; upon interaction with the DnaJ-bound protein, DnaK hydrolyzes its bound ATP, resulting in the formation of a stable complex. GrpE releases ADP from DnaK; ATP binding to DnaK triggers the release of the substrate protein, thus completing the reaction cycle. Several rounds of ATP-dependent interactions between DnaJ, DnaK and GrpE are required for fully efficient folding. Also involved, together with DnaK and GrpE, in the DNA replication of plasmids through activation of initiation proteins. This chain is Chaperone protein DnaJ, found in Latilactobacillus sakei (Lactobacillus sakei).